A 498-amino-acid polypeptide reads, in one-letter code: Glutamyl-tRNA(Gln) amidotransferase subunit A (498 aa).

Active-site charge relay system residues include lysine 85 and serine 160. Serine 184 functions as the Acyl-ester intermediate in the catalytic mechanism.

The protein belongs to the amidase family. GatA subfamily. Heterotrimer of A, B and C subunits.

It carries out the reaction L-glutamyl-tRNA(Gln) + L-glutamine + ATP + H2O = L-glutaminyl-tRNA(Gln) + L-glutamate + ADP + phosphate + H(+). Functionally, allows the formation of correctly charged Gln-tRNA(Gln) through the transamidation of misacylated Glu-tRNA(Gln) in organisms which lack glutaminyl-tRNA synthetase. The reaction takes place in the presence of glutamine and ATP through an activated gamma-phospho-Glu-tRNA(Gln). The chain is Glutamyl-tRNA(Gln) amidotransferase subunit A from Mycolicibacterium vanbaalenii (strain DSM 7251 / JCM 13017 / BCRC 16820 / KCTC 9966 / NRRL B-24157 / PYR-1) (Mycobacterium vanbaalenii).